The sequence spans 390 residues: uncharacterized protein (390 aa).

This is an uncharacterized protein from Archaeoglobus fulgidus (strain ATCC 49558 / DSM 4304 / JCM 9628 / NBRC 100126 / VC-16).